The primary structure comprises 67 residues: (2R)-sulfolactate sulfo-lyase subunit alpha (67 aa).

As to quaternary structure, (2R)-sulfolactate sulfo-lyase is composed of a SuyA and a SuyB subunit.

The protein localises to the cytoplasm. The enzyme catalyses (2R)-3-sulfolactate = sulfite + pyruvate + H(+). Functionally, together with SuyB, desulfonates sulfolactate to pyruvate and sulfite. In Paracoccus pantotrophus (Thiosphaera pantotropha), this protein is (2R)-sulfolactate sulfo-lyase subunit alpha (suyA).